Consider the following 231-residue polypeptide: NADH-ubiquinone oxidoreductase chain 4 (231 aa).

A run of 6 helical transmembrane segments spans residues 1–21 (PIAG…YGII), 34–54 (LFLP…LTCL), 63–85 (IAYS…TPWG), 89–111 (AMAL…NTTY), 128–148 (ILPM…AIPP), and 156–176 (LLIM…LGLS).

The protein belongs to the complex I subunit 4 family.

It localises to the mitochondrion membrane. It carries out the reaction a ubiquinone + NADH + 5 H(+)(in) = a ubiquinol + NAD(+) + 4 H(+)(out). Its function is as follows. Core subunit of the mitochondrial membrane respiratory chain NADH dehydrogenase (Complex I) that is believed to belong to the minimal assembly required for catalysis. Complex I functions in the transfer of electrons from NADH to the respiratory chain. The immediate electron acceptor for the enzyme is believed to be ubiquinone. This is NADH-ubiquinone oxidoreductase chain 4 (MT-ND4) from Crotalus concolor (Midget faded rattlesnake).